The sequence spans 34 residues: Colipase (34 aa).

Cystine bridges form between cysteine 12-cysteine 23 and cysteine 18-cysteine 34.

Belongs to the colipase family. As to quaternary structure, forms a 1:1 stoichiometric complex with pancreatic lipase. As to expression, expressed by the pancreas.

The protein localises to the secreted. In terms of biological role, colipase is a cofactor of pancreatic lipase. It allows the lipase to anchor itself to the lipid-water interface. Without colipase the enzyme is washed off by bile salts, which have an inhibitory effect on the lipase. This is Colipase (CLPS) from Gallus gallus (Chicken).